Here is a 498-residue protein sequence, read N- to C-terminus: ATP synthase subunit beta, chloroplastic (498 aa).

172–179 (GGAGVGKT) contributes to the ATP binding site.

The protein belongs to the ATPase alpha/beta chains family. As to quaternary structure, F-type ATPases have 2 components, CF(1) - the catalytic core - and CF(0) - the membrane proton channel. CF(1) has five subunits: alpha(3), beta(3), gamma(1), delta(1), epsilon(1). CF(0) has four main subunits: a(1), b(1), b'(1) and c(9-12).

It localises to the plastid. It is found in the chloroplast thylakoid membrane. It catalyses the reaction ATP + H2O + 4 H(+)(in) = ADP + phosphate + 5 H(+)(out). In terms of biological role, produces ATP from ADP in the presence of a proton gradient across the membrane. The catalytic sites are hosted primarily by the beta subunits. The polypeptide is ATP synthase subunit beta, chloroplastic (Nypa fruticans (Nypa palm)).